Consider the following 123-residue polypeptide: Large ribosomal subunit protein bL12 (123 aa).

This sequence belongs to the bacterial ribosomal protein bL12 family. As to quaternary structure, homodimer. Part of the ribosomal stalk of the 50S ribosomal subunit. Forms a multimeric L10(L12)X complex, where L10 forms an elongated spine to which 2 to 4 L12 dimers bind in a sequential fashion. Binds GTP-bound translation factors.

Functionally, forms part of the ribosomal stalk which helps the ribosome interact with GTP-bound translation factors. Is thus essential for accurate translation. This Shewanella amazonensis (strain ATCC BAA-1098 / SB2B) protein is Large ribosomal subunit protein bL12.